The chain runs to 430 residues: Asparagine--tRNA ligase (430 aa).

This sequence belongs to the class-II aminoacyl-tRNA synthetase family. As to quaternary structure, homodimer.

The protein resides in the cytoplasm. The enzyme catalyses tRNA(Asn) + L-asparagine + ATP = L-asparaginyl-tRNA(Asn) + AMP + diphosphate + H(+). This Staphylococcus saprophyticus subsp. saprophyticus (strain ATCC 15305 / DSM 20229 / NCIMB 8711 / NCTC 7292 / S-41) protein is Asparagine--tRNA ligase.